The chain runs to 312 residues: MAEVTAALVKELREKSGVGMMDCKKALVENNGDIDASIDWLRAKGLSKAAKKADRVAAEGLVGIVVRAEGAGMIAAAVEVNAETDFLSRNELFQTAVRKIARAGLDNEGVEAISAAKTPDGEVVSDLLTHLIATIGENMVLRRSARFAVAHGAVASYIHNATAPDLGRIGVLVAIEGAGDQTKILELGRKIAMHVAATAPLSLSPDDLDQAAIEKERQIFTEQALESGKPPAVVEKMVEGRIRKFLEEVVLLKQAFVMNPDQTVEQLVAEAGKELGSPLTVKGFVRLALGEGVEKGPEGDFAAEVAAMTGQA.

An involved in Mg(2+) ion dislocation from EF-Tu region spans residues 84–87 (TDFL).

The protein belongs to the EF-Ts family.

The protein resides in the cytoplasm. Associates with the EF-Tu.GDP complex and induces the exchange of GDP to GTP. It remains bound to the aminoacyl-tRNA.EF-Tu.GTP complex up to the GTP hydrolysis stage on the ribosome. This is Elongation factor Ts from Caulobacter sp. (strain K31).